Here is a 130-residue protein sequence, read N- to C-terminus: Small ribosomal subunit protein uS11 (130 aa).

Residues 108-130 (IEDVTPIPHDGTGRPGGKRGRRV) form a disordered region.

It belongs to the universal ribosomal protein uS11 family. In terms of assembly, part of the 30S ribosomal subunit.

Functionally, located on the platform of the 30S subunit. The polypeptide is Small ribosomal subunit protein uS11 (Methanothermobacter thermautotrophicus (strain ATCC 29096 / DSM 1053 / JCM 10044 / NBRC 100330 / Delta H) (Methanobacterium thermoautotrophicum)).